A 740-amino-acid chain; its full sequence is NAD(P)H-quinone oxidoreductase subunit 5, chloroplastic (740 aa).

16 helical membrane-spanning segments follow: residues 9-29 (WIIPFVPLLVTMLIGLGLLLI), 39-59 (IWAFPAVLLLSIVMVFSTKLA), 89-109 (IDPLTSIMSILITTVGIMVLI), 125-145 (FAYMSFFNTSMLGLVTSPNLI), 147-167 (IHIFWELVGMCSYLLIGFWFT), 185-205 (GDFGLLLGILGFYLITGSFEF), 231-251 (AFLLFLGAVAKSAQFPLHVWL), 259-279 (TPISALIHAATMVAAGIFLVA), 281-301 (LLPLFIGIPYIMNIISLIGLI), 328-348 (LGYIMLALGIGSYRAALFHLI), 355-375 (ALLFLGSGSIIHSMEPIVGYS), 397-417 (TTFFLGTLSLCGIPPLACFWS), 426-446 (WLYSPIFATIACYTAGLTAFY), 548-568 (TMLFPLLILAIFTLFVGCIGI), 607-627 (FYSVSIAYFGIFIASVLYGSV), and 719-739 (GRISSYLFLYLACVSIVLLLV).

Belongs to the complex I subunit 5 family. NDH is composed of at least 16 different subunits, 5 of which are encoded in the nucleus.

Its subcellular location is the plastid. It localises to the chloroplast thylakoid membrane. It carries out the reaction a plastoquinone + NADH + (n+1) H(+)(in) = a plastoquinol + NAD(+) + n H(+)(out). The catalysed reaction is a plastoquinone + NADPH + (n+1) H(+)(in) = a plastoquinol + NADP(+) + n H(+)(out). In terms of biological role, NDH shuttles electrons from NAD(P)H:plastoquinone, via FMN and iron-sulfur (Fe-S) centers, to quinones in the photosynthetic chain and possibly in a chloroplast respiratory chain. The immediate electron acceptor for the enzyme in this species is believed to be plastoquinone. Couples the redox reaction to proton translocation, and thus conserves the redox energy in a proton gradient. The protein is NAD(P)H-quinone oxidoreductase subunit 5, chloroplastic (ndhF) of Nuphar advena (Common spatterdock).